The following is a 180-amino-acid chain: Adenine phosphoribosyltransferase (180 aa).

The protein belongs to the purine/pyrimidine phosphoribosyltransferase family. In terms of assembly, homodimer.

The protein resides in the cytoplasm. It carries out the reaction AMP + diphosphate = 5-phospho-alpha-D-ribose 1-diphosphate + adenine. The protein operates within purine metabolism; AMP biosynthesis via salvage pathway; AMP from adenine: step 1/1. Its function is as follows. Catalyzes a salvage reaction resulting in the formation of AMP, that is energically less costly than de novo synthesis. This is Adenine phosphoribosyltransferase from Haemophilus influenzae (strain 86-028NP).